The following is a 248-amino-acid chain: Segregation and condensation protein A (248 aa).

The protein belongs to the ScpA family. In terms of assembly, component of a cohesin-like complex composed of ScpA, ScpB and the Smc homodimer, in which ScpA and ScpB bind to the head domain of Smc. The presence of the three proteins is required for the association of the complex with DNA.

Its subcellular location is the cytoplasm. Functionally, participates in chromosomal partition during cell division. May act via the formation of a condensin-like complex containing Smc and ScpB that pull DNA away from mid-cell into both cell halves. In Bacillus cytotoxicus (strain DSM 22905 / CIP 110041 / 391-98 / NVH 391-98), this protein is Segregation and condensation protein A.